The chain runs to 669 residues: Putative transcription factor SOX-14 (669 aa).

Polar residues predominate over residues 1 to 12 (MIAKPNQATTEP). Disordered stretches follow at residues 1–149 (MIAK…EMTL), 254–336 (YKYR…PKYE), and 419–439 (SSLT…MDNI). The segment covering 17-37 (RPGTVPTVPATTPARPATITI) has biased composition (low complexity). Pro residues predominate over residues 52 to 71 (TLPPFSPSPSPASSPSPAPA). The span at 75–84 (GAQKTQSQAA) shows a compositional bias: polar residues. Residues 88-105 (PAAVASPSAPVAAAAPKT) show a composition bias toward low complexity. Basic and acidic residues predominate over residues 130–145 (RESEMDGERSPSHSGH). The segment at residues 187–255 (IKRPMNAFMV…LHMIEYPNYK (69 aa)) is a DNA-binding region (HMG box). Residues 284–294 (TTNNNNSLTTL) show a composition bias toward low complexity. The span at 295-318 (AINGTTTAGRKSKRSTSTCQSGSA) shows a compositional bias: polar residues. Basic and acidic residues predominate over residues 322–336 (LRNDSGDTSSKPKYE). Residues 419-431 (SSLTQSQHNQSDP) show a composition bias toward polar residues.

The protein localises to the nucleus. In Drosophila melanogaster (Fruit fly), this protein is Putative transcription factor SOX-14 (Sox14).